The chain runs to 549 residues: Oxygen-dependent choline dehydrogenase (549 aa).

An FAD-binding site is contributed by 4–33; the sequence is DFVIIGSGSAGSAMAYRLSEDGRYSVIVIE. The Proton acceptor role is filled by histidine 465.

This sequence belongs to the GMC oxidoreductase family. The cofactor is FAD.

The enzyme catalyses choline + A = betaine aldehyde + AH2. It catalyses the reaction betaine aldehyde + NAD(+) + H2O = glycine betaine + NADH + 2 H(+). It functions in the pathway amine and polyamine biosynthesis; betaine biosynthesis via choline pathway; betaine aldehyde from choline (cytochrome c reductase route): step 1/1. Its function is as follows. Involved in the biosynthesis of the osmoprotectant glycine betaine. Catalyzes the oxidation of choline to betaine aldehyde and betaine aldehyde to glycine betaine at the same rate. The polypeptide is Oxygen-dependent choline dehydrogenase (Brucella melitensis biotype 1 (strain ATCC 23456 / CCUG 17765 / NCTC 10094 / 16M)).